The chain runs to 570 residues: Probable metalloreductase AIM14 (570 aa).

Transmembrane regions (helical) follow at residues I21–L41, A70–L90, L101–R118, I142–D162, F177–M197, L204–S224, and F230–F250. Positions L101–L219 constitute a Ferric oxidoreductase domain. The FAD-binding FR-type domain maps to F250–P388. A compositionally biased stretch (polar residues) spans S481–N505. Residues S481–S507 are disordered.

It belongs to the ferric reductase (FRE) family. AIM14 subfamily. As to quaternary structure, interacts with ribosomes.

It is found in the membrane. Its function is as follows. Probable cell surface metalloreductase. May be involved in iron or copper homeostasis. The chain is Probable metalloreductase AIM14 (AIM14) from Saccharomyces cerevisiae (strain RM11-1a) (Baker's yeast).